The sequence spans 55 residues: Mitochondrial import receptor subunit TOM7 homolog (55 aa).

Over 1–20 (MVKLSKEAKQRLQQLFKGGQ) the chain is Cytoplasmic. The helical transmembrane segment at 21–40 (FAIRWGFIPLVIYLGFTRGA) threads the bilayer. The Mitochondrial intermembrane portion of the chain corresponds to 41–55 (DPGMPEPSVLSLLWG).

It belongs to the Tom7 family. As to quaternary structure, forms part of the preprotein translocase complex of the outer mitochondrial membrane (TOM complex) which consists of at least 7 different proteins (TOMM5, TOMM6, TOMM7, TOMM20, TOMM22, TOMM40 and TOMM70).

It is found in the mitochondrion outer membrane. Its function is as follows. Required for assembly and stability of the TOM complex. Positive regulator of PRKN translocation to damaged mitochondria. Acts probably by stabilizing PINK1 on the outer membrane of depolarized mitochondria. This is Mitochondrial import receptor subunit TOM7 homolog (Tomm7) from Mus musculus (Mouse).